A 357-amino-acid chain; its full sequence is Protein-glutamate methylesterase/protein-glutamine glutaminase 1 (357 aa).

One can recognise a Response regulatory domain in the interval 7 to 125 (RAVIIDDSLL…QFDPEEIGNI (119 aa)). Asp58 is subject to 4-aspartylphosphate. Residues 162–344 (KKSPIQAICI…VEYIEPVTEI (183 aa)) form the CheB-type methylesterase domain. Residues Ser174, His201, and Asp297 contribute to the active site.

Belongs to the CheB family. In terms of processing, phosphorylated by CheA. Phosphorylation of the N-terminal regulatory domain activates the methylesterase activity.

It is found in the cytoplasm. The enzyme catalyses [protein]-L-glutamate 5-O-methyl ester + H2O = L-glutamyl-[protein] + methanol + H(+). The catalysed reaction is L-glutaminyl-[protein] + H2O = L-glutamyl-[protein] + NH4(+). Functionally, involved in chemotaxis. Part of a chemotaxis signal transduction system that modulates chemotaxis in response to various stimuli. Catalyzes the demethylation of specific methylglutamate residues introduced into the chemoreceptors (methyl-accepting chemotaxis proteins or MCP) by CheR. Also mediates the irreversible deamidation of specific glutamine residues to glutamic acid. This is Protein-glutamate methylesterase/protein-glutamine glutaminase 1 from Leptospira interrogans serogroup Icterohaemorrhagiae serovar Lai (strain 56601).